A 178-amino-acid chain; its full sequence is Interleukin-10 (178 aa).

The first 18 residues, 1-18 (MPGSALLCCLLLLTGMRI), serve as a signal peptide directing secretion. The N-linked (GlcNAc...) asparagine glycan is linked to Asn-29. 2 disulfide bridges follow: Cys-30–Cys-126 and Cys-80–Cys-132. An N-linked (GlcNAc...) asparagine glycan is attached at Asn-134.

This sequence belongs to the IL-10 family. Homodimer. Interacts with IL10RA and IL10RB.

It localises to the secreted. Major immune regulatory cytokine that acts on many cells of the immune system where it has profound anti-inflammatory functions, limiting excessive tissue disruption caused by inflammation. Mechanistically, IL10 binds to its heterotetrameric receptor comprising IL10RA and IL10RB leading to JAK1 and STAT2-mediated phosphorylation of STAT3. In turn, STAT3 translocates to the nucleus where it drives expression of anti-inflammatory mediators. Targets antigen-presenting cells (APCs) such as macrophages and monocytes and inhibits their release of pro-inflammatory cytokines including granulocyte-macrophage colony-stimulating factor /GM-CSF, granulocyte colony-stimulating factor/G-CSF, IL-1 alpha, IL-1 beta, IL-6, IL-8 and TNF-alpha. Also interferes with antigen presentation by reducing the expression of MHC-class II and co-stimulatory molecules, thereby inhibiting their ability to induce T cell activation. In addition, controls the inflammatory response of macrophages by reprogramming essential metabolic pathways including mTOR signaling. This chain is Interleukin-10 (Il10), found in Mus musculus (Mouse).